The primary structure comprises 430 residues: Tol-Pal system protein TolB (430 aa).

The N-terminal stretch at 1 to 19 is a signal peptide; it reads MKKQIFFTLILLISGLARA.

The protein belongs to the TolB family. In terms of assembly, the Tol-Pal system is composed of five core proteins: the inner membrane proteins TolA, TolQ and TolR, the periplasmic protein TolB and the outer membrane protein Pal. They form a network linking the inner and outer membranes and the peptidoglycan layer.

It localises to the periplasm. Functionally, part of the Tol-Pal system, which plays a role in outer membrane invagination during cell division and is important for maintaining outer membrane integrity. This Hahella chejuensis (strain KCTC 2396) protein is Tol-Pal system protein TolB.